Consider the following 130-residue polypeptide: Small ribosomal subunit protein uS11c (130 aa).

Belongs to the universal ribosomal protein uS11 family. Part of the 30S ribosomal subunit.

It localises to the plastid. The protein localises to the chloroplast. The polypeptide is Small ribosomal subunit protein uS11c (Pinus koraiensis (Korean pine)).